A 124-amino-acid polypeptide reads, in one-letter code: Protein S100-A16 (124 aa).

The EF-hand 1; degenerate domain occupies 23–37; it reads VSKHSLVKNKISKSS. Residues 54–89 enclose the EF-hand 2 domain; it reads GNRKAADKLIQNLDANHDGRICFDEYWTMIGGITSP. Ca(2+)-binding residues include Asp67, Asn69, Asp71, Arg73, and Glu78. The interval 97–124 is disordered; it reads QECQQESQQECQQESQQESQQESQQGSS.

The protein belongs to the S-100 family. As to quaternary structure, homodimer. Interacts with TP53. Ubiquitous. Widely distributed throughout the adult brain and predominantly expressed within specific astrocyte populations. Expressed at high level in adipose tissues of obese animals.

The protein resides in the nucleus. It is found in the nucleolus. Its subcellular location is the cytoplasm. Functionally, calcium-binding protein. Binds one calcium ion per monomer. Can promote differentiation of adipocytes (in vitro). Overexpression in 3T3-L1 preadipocytes increases their proliferation, enhances adipogenesis and reduces insulin-stimulated glucose uptake. This Mus musculus (Mouse) protein is Protein S100-A16.